The chain runs to 620 residues: Arginine--tRNA ligase (620 aa).

The 'HIGH' region motif lies at 147–157 (ANPTGPIHIGG).

Belongs to the class-I aminoacyl-tRNA synthetase family. In terms of assembly, monomer.

Its subcellular location is the cytoplasm. The enzyme catalyses tRNA(Arg) + L-arginine + ATP = L-arginyl-tRNA(Arg) + AMP + diphosphate. This is Arginine--tRNA ligase from Bifidobacterium longum (strain NCC 2705).